A 245-amino-acid chain; its full sequence is tRNA (guanine-N(7)-)-methyltransferase (245 aa).

S-adenosyl-L-methionine is bound by residues Glu75, Glu100, Asp127, and Asp149. The active site involves Asp149. Substrate-binding positions include Lys153, Asp185, and 222 to 225 (TKFE).

This sequence belongs to the class I-like SAM-binding methyltransferase superfamily. TrmB family.

The catalysed reaction is guanosine(46) in tRNA + S-adenosyl-L-methionine = N(7)-methylguanosine(46) in tRNA + S-adenosyl-L-homocysteine. Its pathway is tRNA modification; N(7)-methylguanine-tRNA biosynthesis. Its function is as follows. Catalyzes the formation of N(7)-methylguanine at position 46 (m7G46) in tRNA. The polypeptide is tRNA (guanine-N(7)-)-methyltransferase (Acinetobacter baylyi (strain ATCC 33305 / BD413 / ADP1)).